Here is a 511-residue protein sequence, read N- to C-terminus: Acetylcholine receptor subunit alpha-type unc-38 (511 aa).

The signal sequence occupies residues 1–16 (MRSFWLFLLLLLFCIS). Over 17–261 (FIKLTEGNED…QLRRKPLFYT (245 aa)) the chain is Extracellular. N-linked (GlcNAc...) asparagine glycosylation is present at N124. C151 and C165 form a disulfide bridge. A glycan (N-linked (GlcNAc...) asparagine) is linked at N202. A disulfide bridge connects residues C238 and C239. 3 helical membrane-spanning segments follow: residues 262 to 282 (VNLVFPCVGISFLTILVFYLP), 291 to 311 (LCISILVALTIFFLLLTEIIP), and 324 to 344 (LLFTMVMVTLSVVVTVISLNL). Residues 345–464 (HFRTPTTHLM…WKYVAMVLDR (120 aa)) are Cytoplasmic-facing. A helical membrane pass occupies residues 465–485 (LFLLIFSIACFVGTVIILLRA).

It belongs to the ligand-gated ion channel (TC 1.A.9) family. Acetylcholine receptor (TC 1.A.9.1) subfamily. In terms of assembly, component of nicotinic acetylcholine receptor. In muscles, composed of 2 non-alpha subunits lev-1 and unc-29, and 3 alpha subunits unc-38, unc-63 and lev-8. In cholinergic motoneurons, composed of 2 non-alpha subunits acr-2 and acr-3, and 3 alpha subunits unc-38, unc-63 and acr-12.

It localises to the postsynaptic cell membrane. The protein resides in the cell membrane. Alpha subunit of nicotinic acetylcholine receptor (nAChR). Probably acts in cholinergic motoneurons to regulate presynaptic neurotransmitter release, thereby ensuring normal level of excitation of cholinergic motoneurons during locomotion. Involved in nAChR sensitivity to nicotine. In Caenorhabditis elegans, this protein is Acetylcholine receptor subunit alpha-type unc-38 (unc-38).